A 226-amino-acid polypeptide reads, in one-letter code: METVVIVAIGVLATIFLASFAALVLVCRQRYCRPRDLLQRYDSKPIVDLIGAMETQSEPSELELDDVVITNPHIEAILENEDWIEDASGLMSHCIAILKICHTLTEKLVAMTMGSGAKMKTSASVSDIIVVAKRISPRVDDVVKSMYPPLDPKLLDARTTALLLSVSHLVLVTRNACHLTGGLDWIDQSLSAAEEHLEVLREAALASEPDKGLPGPEGFLQEQSAI.

At 1-3 (MET) the chain is on the cytoplasmic side. The required for interaction with MYRF stretch occupies residues 1–88 (METVVIVAIG…ENEDWIEDAS (88 aa)). The chain crosses the membrane as a helical span at residues 4 to 24 (VVIVAIGVLATIFLASFAALV). Topologically, residues 25 to 226 (LVCRQRYCRP…EGFLQEQSAI (202 aa)) are extracellular. Residues 207-226 (SEPDKGLPGPEGFLQEQSAI) are disordered.

It belongs to the TMEM98 family. As to quaternary structure, interacts (via N-terminal region) with MYRF; the interaction inhibits MYRF self-cleavage. Widely expressed with high expression in the ovary, pancreas and prostate. Expressed in the eye, particularly in corneal endothelium, iris, ciliary body, sclera, optic nerve, optic nerve head, and retina. Expressed by activated peripheral blood mononuclear cells.

The protein resides in the cell membrane. It is found in the secreted. The protein localises to the extracellular exosome. Its subcellular location is the endoplasmic reticulum membrane. Functions as a negative regulator of MYRF in oligodendrocyte differentiation and myelination. Interacts with the C-terminal of MYRF inhibiting MYRF self-cleavage and N-fragment nuclear translocation. The secreted form promotes differentiation of T helper 1 cells (Th1). This chain is Transmembrane protein 98 (TMEM98), found in Homo sapiens (Human).